Consider the following 141-residue polypeptide: MAKKVVGFIKLQIPAGAANPAPPVGPALGQKGVNIMEFCKQFNAKTQSQSGTIIPVVITVYSDKSFTFITKTPPAAVLLVKEAGLQKGSGEPNKNKVGKVTEEQVRKIAELKMPDLNAFDIDGAMQMIRGTARSMGIVVEG.

Belongs to the universal ribosomal protein uL11 family. Part of the ribosomal stalk of the 50S ribosomal subunit. Interacts with L10 and the large rRNA to form the base of the stalk. L10 forms an elongated spine to which L12 dimers bind in a sequential fashion forming a multimeric L10(L12)X complex. Post-translationally, one or more lysine residues are methylated.

Its function is as follows. Forms part of the ribosomal stalk which helps the ribosome interact with GTP-bound translation factors. The polypeptide is Large ribosomal subunit protein uL11 (Chlorobium phaeobacteroides (strain BS1)).